A 552-amino-acid polypeptide reads, in one-letter code: Acyl-CoA-dependent acyltransferase MAC1 (552 aa).

Belongs to the trichothecene O-acetyltransferase family.

Its pathway is secondary metabolite biosynthesis. Functionally, acyl-CoA-dependent acyltransferase; part of the gene cluster that mediates the biosynthesis of mannosylerythritol lipids (MELs), surface-active substances that enhance the availability of water-insoluble substrates. Depending on the number of acetyl groups, mannosylerythritol lipids can be differentiated into MEL A (fully acetylated), MEL B and MEL C (monoacetylated at R-6 and R-4, respectively), and the fully deacetylated MEL D. The first step in the pathway is the generation of mannosylerythritol by the glycosyltransferase EMT1 which catalyzes the transfer of GDP-mannose to the C-4 atom of meso-erythritol. This reaction has to be stereospecific, since only mannosyl-D-erythritol is generated. The produced disaccharide is subsequently acylated with fatty acids of various lengths by the acyltransferases MAC1 and MAC2 at positions C-2 and C-3, repectively. The existence of MEL derivatives which carry an acetyl group at C-2 implies that at least MAC1 also accepts acetyl-CoA as a donor. The final step of MEL biosynthesis is the acetylation of the fully acylated mannosylerythritol lipids catalyzed by the acetyl-CoA-dependent acetyltransferase MAT1. MAT1 displays a relaxed regioselectivity and is able to transfer acetylgroups to both positions C-4 and C-6 of the mannosyl moiety. In Pseudozyma antarctica (strain T-34) (Yeast), this protein is Acyl-CoA-dependent acyltransferase MAC1.